Reading from the N-terminus, the 1105-residue chain is Mediator of RNA polymerase II transcription subunit 14 (1105 aa).

A disordered region spans residues A28 to P48.

Belongs to the Mediator complex subunit 14 family. Component of the Mediator complex.

It is found in the nucleus. Functionally, component of the Mediator complex, a coactivator involved in the regulated transcription of nearly all RNA polymerase II-dependent genes. Mediator functions as a bridge to convey information from gene-specific regulatory proteins to the basal RNA polymerase II transcription machinery. Mediator is recruited to promoters by direct interactions with regulatory proteins and serves as a scaffold for the assembly of a functional preinitiation complex with RNA polymerase II and the general transcription factors. The polypeptide is Mediator of RNA polymerase II transcription subunit 14 (RGR1) (Coccidioides immitis (strain RS) (Valley fever fungus)).